The sequence spans 246 residues: MDAFIRVANQSQGRDRLFRATQHACMLLRYLLESKADKEAVVLKLKRLETSVSTGRKWFRLGNVFHAIQATEQSIQAADLAPRLCLTLANLNRVVYYICDTVLWAKSVGLTSGVNREKWQRWAARHYYYFLLLSLVRDLYEILLQMGQVARDRAKREKSSRDPPKYSVANEETEWLQSFLLLLFQSLKRHPPLLLDTVKNFCDILIPLNQLGIYKSNLGVVGLGGLISSLAGLLTVVYPQLKLKAR.

Over 1–93 (MDAFIRVANQ…LCLTLANLNR (93 aa)) the chain is Cytoplasmic. Residues 94 to 114 (VVYYICDTVLWAKSVGLTSGV) form a helical membrane-spanning segment. Residues 115–217 (NREKWQRWAA…LNQLGIYKSN (103 aa)) lie on the Lumenal side of the membrane. A helical membrane pass occupies residues 218–238 (LGVVGLGGLISSLAGLLTVVY). Residues 218–238 (LGVVGLGGLISSLAGLLTVVY) are required for homodimerization, interaction with PEX11G, and peroxisomal localization. Topologically, residues 239 to 246 (PQLKLKAR) are cytoplasmic.

It belongs to the peroxin-11 family. Homodimer. Heterodimer with PEX11G. Probably interacts with COPB2 and COPA. Interacts with PEX19. Interacts with FIS1. In terms of tissue distribution, strongly expressed in liver and at lower levels in heart, brain, kidney and testis.

The protein resides in the peroxisome membrane. May be involved in peroxisomal proliferation and may regulate peroxisomes division. May mediate binding of coatomer proteins to the peroxisomal membrane. Promotes membrane protrusion and elongation on the peroxisomal surface. In Mus musculus (Mouse), this protein is Peroxisomal membrane protein 11A (Pex11a).